The sequence spans 170 residues: 6,7-dimethyl-8-ribityllumazine synthase 2 (170 aa).

Residues W25, 59–61, and 83–85 each bind 5-amino-6-(D-ribitylamino)uracil; these read AFE and LVV. R91 (proton donor) is an active-site residue. Residue S116 participates in 5-amino-6-(D-ribitylamino)uracil binding. Position 130 (H130) interacts with (2S)-2-hydroxy-3-oxobutyl phosphate.

It belongs to the DMRL synthase family. In terms of assembly, forms an icosahedral capsid composed of 60 subunits, arranged as a dodecamer of pentamers.

It carries out the reaction (2S)-2-hydroxy-3-oxobutyl phosphate + 5-amino-6-(D-ribitylamino)uracil = 6,7-dimethyl-8-(1-D-ribityl)lumazine + phosphate + 2 H2O + H(+). It participates in cofactor biosynthesis; riboflavin biosynthesis; riboflavin from 2-hydroxy-3-oxobutyl phosphate and 5-amino-6-(D-ribitylamino)uracil: step 1/2. Functionally, catalyzes the formation of 6,7-dimethyl-8-ribityllumazine by condensation of 5-amino-6-(D-ribitylamino)uracil with 3,4-dihydroxy-2-butanone 4-phosphate. This is the penultimate step in the biosynthesis of riboflavin. In Pseudomonas syringae pv. tomato (strain ATCC BAA-871 / DC3000), this protein is 6,7-dimethyl-8-ribityllumazine synthase 2.